The chain runs to 511 residues: NAD(P)H-quinone oxidoreductase subunit 2, chloroplastic (511 aa).

The next 14 helical transmembrane spans lie at 15–35 (LLPE…DLTF), 39–59 (VLSW…VVLL), 78–98 (SLSI…ILLS), 108–128 (ALTE…LLSG), 132–152 (LIMI…LTGY), 167–187 (LLIG…LYGL), 210–230 (FASW…VAAA), 244–264 (PTPV…ALAT), 278–298 (WHLL…LIAI), 306–326 (MLGY…IAGN), 334–354 (LVYM…IILF), 377–397 (VFCF…AGFF), 410–430 (GFYI…YYYL), and 466–486 (LGIG…NPII).

Belongs to the complex I subunit 2 family. NDH is composed of at least 16 different subunits, 5 of which are encoded in the nucleus.

Its subcellular location is the plastid. It is found in the chloroplast thylakoid membrane. The catalysed reaction is a plastoquinone + NADH + (n+1) H(+)(in) = a plastoquinol + NAD(+) + n H(+)(out). It catalyses the reaction a plastoquinone + NADPH + (n+1) H(+)(in) = a plastoquinol + NADP(+) + n H(+)(out). Functionally, NDH shuttles electrons from NAD(P)H:plastoquinone, via FMN and iron-sulfur (Fe-S) centers, to quinones in the photosynthetic chain and possibly in a chloroplast respiratory chain. The immediate electron acceptor for the enzyme in this species is believed to be plastoquinone. Couples the redox reaction to proton translocation, and thus conserves the redox energy in a proton gradient. This Chlorokybus atmophyticus (Soil alga) protein is NAD(P)H-quinone oxidoreductase subunit 2, chloroplastic.